The primary structure comprises 150 residues: Transmembrane protein PMIS2 (150 aa).

Positions 1–12 (MALKPPSATQPA) are enriched in low complexity. Residues 1–61 (MALKPPSATQ…EPQEPTQTPE (61 aa)) are disordered. A compositionally biased stretch (pro residues) spans 13 to 22 (PNAPATPDAP). Over residues 23–61 (PTTGDPGASAAPGSPTTTGGPGAPAEVPQEPQEPTQTPE) the composition is skewed to low complexity. 2 helical membrane-spanning segments follow: residues 71 to 91 (LCLTIFAILLFPPFGLAALYF) and 130 to 150 (GWFGAFVVMIGLGIIYGLVLY).

Belongs to the CD225/Dispanin family.

It localises to the membrane. May play a role in spermatozoa mobility. The sequence is that of Transmembrane protein PMIS2 from Homo sapiens (Human).